The primary structure comprises 410 residues: Cysteine desulfurase IscS (410 aa).

Pyridoxal 5'-phosphate-binding positions include A79–T80, N159, Q187, and S207–H209. Residue K210 is modified to N6-(pyridoxal phosphate)lysine. T248 lines the pyridoxal 5'-phosphate pocket. Residue C334 is the Cysteine persulfide intermediate of the active site. C334 contacts [2Fe-2S] cluster.

Belongs to the class-V pyridoxal-phosphate-dependent aminotransferase family. NifS/IscS subfamily. In terms of assembly, homodimer. Forms a heterotetramer with IscU, interacts with other sulfur acceptors. It depends on pyridoxal 5'-phosphate as a cofactor.

The protein resides in the cytoplasm. It catalyses the reaction (sulfur carrier)-H + L-cysteine = (sulfur carrier)-SH + L-alanine. The protein operates within cofactor biosynthesis; iron-sulfur cluster biosynthesis. In terms of biological role, master enzyme that delivers sulfur to a number of partners involved in Fe-S cluster assembly, tRNA modification or cofactor biosynthesis. Catalyzes the removal of elemental sulfur atoms from cysteine to produce alanine. Functions as a sulfur delivery protein for Fe-S cluster synthesis onto IscU, an Fe-S scaffold assembly protein, as well as other S acceptor proteins. This Ehrlichia chaffeensis (strain ATCC CRL-10679 / Arkansas) protein is Cysteine desulfurase IscS.